A 70-amino-acid polypeptide reads, in one-letter code: MGKVRPTFVKRPAREIVEKYEEYLTTDFEHNKKVVEIVARPKTKKLRNMIAGYVTHLMRLKERQREEGTE.

The protein belongs to the eukaryotic ribosomal protein eS17 family.

This is Small ribosomal subunit protein eS17 from Methanopyrus kandleri (strain AV19 / DSM 6324 / JCM 9639 / NBRC 100938).